The primary structure comprises 578 residues: Sulfite reductase [NADPH] hemoprotein beta-component (578 aa).

Positions 441, 447, 487, and 491 each coordinate [4Fe-4S] cluster. Residue Cys-491 coordinates siroheme.

This sequence belongs to the nitrite and sulfite reductase 4Fe-4S domain family. In terms of assembly, alpha(8)-beta(8). The alpha component is a flavoprotein, the beta component is a hemoprotein. Siroheme serves as cofactor. The cofactor is [4Fe-4S] cluster.

It carries out the reaction hydrogen sulfide + 3 NADP(+) + 3 H2O = sulfite + 3 NADPH + 4 H(+). Its pathway is sulfur metabolism; hydrogen sulfide biosynthesis; hydrogen sulfide from sulfite (NADPH route): step 1/1. In terms of biological role, component of the sulfite reductase complex that catalyzes the 6-electron reduction of sulfite to sulfide. This is one of several activities required for the biosynthesis of L-cysteine from sulfate. The sequence is that of Sulfite reductase [NADPH] hemoprotein beta-component from Vibrio vulnificus (strain YJ016).